Consider the following 327-residue polypeptide: Nucleotide-binding protein CYB_0992 (327 aa).

12–19 (GLTGAGKT) is a binding site for ATP.

Belongs to the RapZ-like family.

Displays ATPase and GTPase activities. The sequence is that of Nucleotide-binding protein CYB_0992 from Synechococcus sp. (strain JA-2-3B'a(2-13)) (Cyanobacteria bacterium Yellowstone B-Prime).